The chain runs to 504 residues: ATP synthase subunit alpha 2 (504 aa).

169–176 (GDRQTGKT) contributes to the ATP binding site.

The protein belongs to the ATPase alpha/beta chains family. In terms of assembly, F-type ATPases have 2 components, CF(1) - the catalytic core - and CF(0) - the membrane proton channel. CF(1) has five subunits: alpha(3), beta(3), gamma(1), delta(1), epsilon(1). CF(0) has three main subunits: a(1), b(2) and c(9-12). The alpha and beta chains form an alternating ring which encloses part of the gamma chain. CF(1) is attached to CF(0) by a central stalk formed by the gamma and epsilon chains, while a peripheral stalk is formed by the delta and b chains.

It localises to the cell membrane. The enzyme catalyses ATP + H2O + 4 H(+)(in) = ADP + phosphate + 5 H(+)(out). Functionally, produces ATP from ADP in the presence of a proton gradient across the membrane. The alpha chain is a regulatory subunit. The protein is ATP synthase subunit alpha 2 of Listeria monocytogenes serotype 4b (strain F2365).